The following is a 202-amino-acid chain: Transmembrane gamma-carboxyglutamic acid protein 2 (202 aa).

The N-terminal stretch at 1–23 (MRGHPSLLLLYMALTTCLDTSPS) is a signal peptide. Residues 24 to 49 (EETDQEVFLGPPEAQSFLSSHTRIPR) constitute a propeptide that is removed on maturation. The Gla domain occupies 50 to 96 (ANHWDLELLTPGNLERECLEERCSWEEAREYFEDNTLTERFWESYIY). Over 50–109 (ANHWDLELLTPGNLERECLEERCSWEEAREYFEDNTLTERFWESYIYNGKGGRGRVDVAS) the chain is Extracellular. Cysteines 67 and 72 form a disulfide. Glu-70 carries the 4-carboxyglutamate modification. A helical transmembrane segment spans residues 110-130 (LAVGLTGGILLIVLAGLGAFW). The Cytoplasmic portion of the chain corresponds to 131–202 (YLRWRQHRGQ…PPYTSLRRPH (72 aa)). Residues 143-202 (CPQEAGLISPLSPLNPLGPPTPLPPPPPPPPGLPTYEQALAASGVHDAPPPPYTSLRRPH) form a disordered region. A compositionally biased stretch (pro residues) spans 158–175 (PLGPPTPLPPPPPPPPGL). An LPXY motif; mediates binding to WW domain-containing proteins motif is present at residues 175–178 (LPTY). Positions 192 to 195 (PPPY) match the PPXY motif; mediates binding to WW domain-containing proteins motif.

Interacts with NEDD4. Interacts (via cytoplasmic domain) with transcriptional coactivator YAP1. Post-translationally, gamma-carboxyglutamate residues are formed by vitamin K dependent carboxylation. These residues are essential for the binding of calcium. As to expression, widely expressed with highest levels in kidney. Also highly expressed in the thyroid.

The protein localises to the cell membrane. In Homo sapiens (Human), this protein is Transmembrane gamma-carboxyglutamic acid protein 2.